Here is a 273-residue protein sequence, read N- to C-terminus: MERREHLTLTFHSPEVPKIKGNRKYQRPTVPAKKHPSASMSCQRQQQLMDQAHIYIRTLCGSLCSFSLLMLIAMSPLNWVQFLVIKNGLELYAGLWTLCNHELCWSHTPKPPYYLQYSRAFFLISVFTILTGLGWLFSSWILNRGSMTTNLDLKVSMLSFISATCLLLCLNLFVAQVHWHTRDAMESDLLWTYYLNWCSDIFYMFAGIISLLNYLTSRSPACDENVTVIPTERSRLGVGPVTTVSPAKDEGPRSEMESLSVREKNLPKSGLWW.

Helical transmembrane passes span 53–75 (HIYI…IAMS), 121–141 (FFLI…SSWI), 155–175 (VSML…LFVA), and 189–209 (LLWT…AGII). The tract at residues 242-273 (TTVSPAKDEGPRSEMESLSVREKNLPKSGLWW) is disordered. Basic and acidic residues predominate over residues 247-266 (AKDEGPRSEMESLSVREKNL).

It is found in the membrane. The chain is Transmembrane protein 202 (TMEM202) from Homo sapiens (Human).